The primary structure comprises 244 residues: Aspartate/glutamate leucyltransferase (244 aa).

Belongs to the R-transferase family. Bpt subfamily.

It localises to the cytoplasm. It carries out the reaction N-terminal L-glutamyl-[protein] + L-leucyl-tRNA(Leu) = N-terminal L-leucyl-L-glutamyl-[protein] + tRNA(Leu) + H(+). It catalyses the reaction N-terminal L-aspartyl-[protein] + L-leucyl-tRNA(Leu) = N-terminal L-leucyl-L-aspartyl-[protein] + tRNA(Leu) + H(+). Functionally, functions in the N-end rule pathway of protein degradation where it conjugates Leu from its aminoacyl-tRNA to the N-termini of proteins containing an N-terminal aspartate or glutamate. The polypeptide is Aspartate/glutamate leucyltransferase (Paramagnetospirillum magneticum (strain ATCC 700264 / AMB-1) (Magnetospirillum magneticum)).